The primary structure comprises 339 residues: Anthranilate phosphoribosyltransferase (339 aa).

5-phospho-alpha-D-ribose 1-diphosphate contacts are provided by residues Gly-81, 84 to 85, Ser-89, 91 to 94, 109 to 117, and Ala-121; these read GD, NVST, and KHGNRALSS. Position 81 (Gly-81) interacts with anthranilate. Ser-93 is a Mg(2+) binding site. Anthranilate is bound at residue Asn-112. Arg-167 is a binding site for anthranilate. Residues Asp-226 and Glu-227 each contribute to the Mg(2+) site.

Belongs to the anthranilate phosphoribosyltransferase family. As to quaternary structure, homodimer. Mg(2+) serves as cofactor.

The enzyme catalyses N-(5-phospho-beta-D-ribosyl)anthranilate + diphosphate = 5-phospho-alpha-D-ribose 1-diphosphate + anthranilate. It participates in amino-acid biosynthesis; L-tryptophan biosynthesis; L-tryptophan from chorismate: step 2/5. In terms of biological role, catalyzes the transfer of the phosphoribosyl group of 5-phosphorylribose-1-pyrophosphate (PRPP) to anthranilate to yield N-(5'-phosphoribosyl)-anthranilate (PRA). The chain is Anthranilate phosphoribosyltransferase from Rhodopseudomonas palustris (strain BisA53).